Reading from the N-terminus, the 142-residue chain is Transcriptional regulator MraZ (142 aa).

SpoVT-AbrB domains follow at residues 5–51 and 77–120; these read ASAL…PRPE and AMDV…DAQT.

Belongs to the MraZ family. Forms oligomers.

The protein localises to the cytoplasm. Its subcellular location is the nucleoid. This Paraburkholderia phytofirmans (strain DSM 17436 / LMG 22146 / PsJN) (Burkholderia phytofirmans) protein is Transcriptional regulator MraZ.